A 60-amino-acid chain; its full sequence is Large ribosomal subunit protein uL30 (60 aa).

This sequence belongs to the universal ribosomal protein uL30 family. As to quaternary structure, part of the 50S ribosomal subunit.

The protein is Large ribosomal subunit protein uL30 of Streptococcus pneumoniae serotype 2 (strain D39 / NCTC 7466).